The chain runs to 311 residues: Malate dehydrogenase (311 aa).

NAD(+) contacts are provided by residues 7–13 (GAAGGIG) and aspartate 34. Substrate is bound by residues arginine 81 and arginine 87. NAD(+)-binding positions include asparagine 94 and 117 to 119 (ITN). Asparagine 119 and arginine 153 together coordinate substrate. The Proton acceptor role is filled by histidine 177. An NAD(+)-binding site is contributed by methionine 227.

It belongs to the LDH/MDH superfamily. MDH type 1 family. Homodimer.

The catalysed reaction is (S)-malate + NAD(+) = oxaloacetate + NADH + H(+). Its function is as follows. Catalyzes the reversible oxidation of malate to oxaloacetate. The protein is Malate dehydrogenase of Vibrio atlanticus (strain LGP32) (Vibrio splendidus (strain Mel32)).